Consider the following 351-residue polypeptide: Ferrochelatase (351 aa).

Fe cation-binding residues include His184 and Glu265.

This sequence belongs to the ferrochelatase family.

The protein localises to the cytoplasm. The enzyme catalyses heme b + 2 H(+) = protoporphyrin IX + Fe(2+). Its pathway is porphyrin-containing compound metabolism; protoheme biosynthesis; protoheme from protoporphyrin-IX: step 1/1. Catalyzes the ferrous insertion into protoporphyrin IX. The polypeptide is Ferrochelatase (Rhodopirellula baltica (strain DSM 10527 / NCIMB 13988 / SH1)).